Here is a 1081-residue protein sequence, read N- to C-terminus: Psi-producing oxygenase A (1081 aa).

The tract at residues 105–446 (TKSFLNMLWN…DGAFNDDDLV (342 aa)) is linoleate 8R-lipoxygenase. H202 serves as a coordination point for heme b. Y374 is an active-site residue. H377 provides a ligand contact to heme b. The tract at residues 654–1081 (IFISSHAACM…GELPQLKEDF (428 aa)) is 9,12-octadecadienoate 8-hydroperoxide 8R-isomerase.

This sequence belongs to the peroxidase family. As to quaternary structure, homotetramer. Requires heme b as cofactor.

It catalyses the reaction (9Z,12Z)-octadecadienoate + O2 = (8R,9Z,12Z)-8-hydroperoxyoctadeca-9,12-dienoate. The catalysed reaction is (8R,9Z,12Z)-8-hydroperoxyoctadeca-9,12-dienoate = (5S,8R,9Z,12Z)-5,8-dihydroxyoctadeca-9,12-dienoate. Functionally, bifunctional heme-containing enzyme that oxidizes linoleic acid to (8R,9Z,12Z)-8-hydroperoxyoctadeca-9,12-dienoate (within the N-terminal heme peroxidase domain), which is subsequently isomerized to (5S,8R,9Z,12Z)-5,8-dihydroxyoctadeca-9,12-dienoate (within the C-terminal P450 heme thiolate domain). Oxidized unsaturated fatty acids, so-called oxylipins, derived from endogenous fatty acids, influence the development of the asexual conidiophores and sexual cleistothecia and regulate the secondary metabolism. These substances were collectively named psi factors and are primarily a mixture of hydroxylated oleic, linoleic and alpha-linolenic acids. They are termed psi-beta, psi-alpha, and psi-gamma, respectively. This Emericella nidulans (Aspergillus nidulans) protein is Psi-producing oxygenase A (ppoA).